A 532-amino-acid chain; its full sequence is Calnexin homolog 2 (532 aa).

The N-terminal stretch at 1–25 is a signal peptide; it reads MRERIITFVSLLLVALLSFPSVSYC. Residues 26–468 are Lumenal-facing; the sequence is DDQTILYESF…EKAETQPNLT (443 aa). Residues S34 and D65 each coordinate Ca(2+). A disulfide bridge connects residues C110 and C145. An alpha-D-glucoside-binding residues include Y114, K116, Y136, and D143. The segment at 208–302 is disordered; it reads NLLSAEDFEP…DEEDGEWEAP (95 aa). Positions 225 to 358 are p domain (Extended arm); that stretch reads IPDPEDKKPE…RDIPNPDYFE (134 aa). Residues 226–242 show a composition bias toward basic and acidic residues; sequence PDPEDKKPEDWDERAKI. Tandem repeats lie at residues 227–238, 244–255, 263–274, 282–293, and 297–307. 2 4 X approximate repeats regions span residues 227–293 and 297–354; these read DPED…DWDD and GEWE…IPNP. 2 stretches are compositionally biased toward acidic residues: residues 252–283 and 290–299; these read DWDE…VEDP and DWDDEEDGEW. C309 and C315 are disulfide-bonded. Tandem repeats lie at residues 316 to 326, 330 to 340, and 344 to 354. E373 contacts an alpha-D-glucoside. D384 is a Ca(2+) binding site. N466 carries N-linked (GlcNAc...) asparagine glycosylation. The chain crosses the membrane as a helical span at residues 469-489; it reads IGVLISIVIVFLSLFFKLIFG. The Cytoplasmic segment spans residues 490–532; sequence GAKAKVEKKKPETAAETSTSEAKTEEKAEAVAAPRKRQTRRES. Positions 493–532 are disordered; that stretch reads AKVEKKKPETAAETSTSEAKTEEKAEAVAAPRKRQTRRES. Residues 523 to 532 show a composition bias toward basic residues; the sequence is PRKRQTRRES.

This sequence belongs to the calreticulin family.

It is found in the endoplasmic reticulum membrane. Calcium-binding protein that interacts with newly synthesized monoglucosylated glycoproteins in the endoplasmic reticulum. It may act in assisting protein assembly and/or in the retention within the ER of unassembled protein subunits. It seems to play a major role in the quality control apparatus of the ER by the retention of incorrectly folded proteins. The protein is Calnexin homolog 2 of Arabidopsis thaliana (Mouse-ear cress).